The sequence spans 182 residues: Adenine phosphoribosyltransferase (182 aa).

It belongs to the purine/pyrimidine phosphoribosyltransferase family. Homodimer.

The protein localises to the cytoplasm. It carries out the reaction AMP + diphosphate = 5-phospho-alpha-D-ribose 1-diphosphate + adenine. Its pathway is purine metabolism; AMP biosynthesis via salvage pathway; AMP from adenine: step 1/1. Catalyzes a salvage reaction resulting in the formation of AMP, that is energically less costly than de novo synthesis. The chain is Adenine phosphoribosyltransferase from Pseudomonas aeruginosa (strain LESB58).